The chain runs to 262 residues: Thrombin-like enzyme gyroxin B1.3 (262 aa).

A signal peptide spans 1-18 (MVLIRVLANLLILQLSYA). A propeptide spanning residues 19-262 (QKSSELVIGG…AGSETVNCPS (244 aa)) is cleaved from the precursor. Positions 25–253 (VIGGDECNIN…HLDWIQNIIA (229 aa)) constitute a Peptidase S1 domain. Cystine bridges form between Cys-31–Cys-165, Cys-52–Cys-68, Cys-102–Cys-260, Cys-144–Cys-214, Cys-176–Cys-193, and Cys-204–Cys-229. His-67 functions as the Charge relay system in the catalytic mechanism. A glycan (N-linked (GlcNAc...) asparagine) is linked at Asn-105. Asp-112 (charge relay system) is an active-site residue. The active-site Charge relay system is the Ser-208.

The protein belongs to the peptidase S1 family. Snake venom subfamily. In terms of assembly, monomer. Expressed by the venom gland.

The protein localises to the secreted. Its function is as follows. Thrombin-like snake venom serine protease. Displays a specificity similar to trypsin. Releases only fibrinopeptide A in the conversion of fibrinogen to fibrin. Reversibly increases the permeability of the blood brain barrier (BBB) in mice. Induces the barrel rotation syndrome in mice, which is manifested by gyroxin-like, rapid rolling motions. This syndrome may be due to its effect on BBB permeability, and certainly also to other actions affecting endogenous substrates present in the endothelium, nervous tissues or blood. Also shows a moderate inhibitory activity on the human voltage-gated potassium channel Kv10.1/KCNH1/EAG1 (58% current inhibition at 5 uM). It blocks Kv10.1/KCNH1/EAG1 in a time and dose-dependent manner and with a mechanism independent of its enzymatic activity. It may have a preference in interacting with Kv10.1/KCNH1/EAG1 in its closed state, since the inhibitory effect of the toxin is decreased at more depolarized potentials. The sequence is that of Thrombin-like enzyme gyroxin B1.3 from Crotalus durissus terrificus (South American rattlesnake).